We begin with the raw amino-acid sequence, 67 residues long: Alpha-toxin Bu1 (67 aa).

Positions 3 to 65 constitute an LCN-type CS-alpha/beta domain; sequence RDAYIADDKN…VPIRIPGRCR (63 aa). 4 cysteine pairs are disulfide-bonded: cysteine 13–cysteine 64, cysteine 17–cysteine 37, cysteine 23–cysteine 47, and cysteine 27–cysteine 49. Arginine 65 bears the Arginine amide mark.

The protein belongs to the long (4 C-C) scorpion toxin superfamily. Sodium channel inhibitor family. Alpha subfamily. As to expression, expressed by the venom gland.

Its subcellular location is the secreted. Functionally, alpha toxins bind voltage-independently at site-3 of sodium channels (Nav) and inhibit the inactivation of the activated channels, thereby blocking neuronal transmission. Since the experiments have been done on F11 cells (immortalized cell line derived from rat DRG neurons mainly expressing Nav1.3/SCN3A, but also Nav1.7/SCN9A and Nav1.2/SCN2A), it is supposed to act on these channels. The slow of inactivation process is partially reversible. Is lethal to mice. This chain is Alpha-toxin Bu1, found in Buthacus macrocentrus (Turkish scorpion).